The primary structure comprises 138 residues: Small ribosomal subunit protein uS11c (138 aa).

A disordered region spans residues 1–23; it reads MAKPIQRIGSRRNGPIGSRKNGR.

This sequence belongs to the universal ribosomal protein uS11 family. Part of the 30S ribosomal subunit.

It is found in the plastid. The protein resides in the chloroplast. The chain is Small ribosomal subunit protein uS11c from Platanus occidentalis (Sycamore).